The sequence spans 66 residues: Large ribosomal subunit protein uL29 (66 aa).

It belongs to the universal ribosomal protein uL29 family.

This Thermococcus gammatolerans (strain DSM 15229 / JCM 11827 / EJ3) protein is Large ribosomal subunit protein uL29.